The sequence spans 692 residues: Transforming growth factor beta activator LRRC33 (692 aa).

Residues 1–18 (MELLPLWLCLGFHFLTVG) form the signal peptide. Topologically, residues 19 to 650 (WRNRSGTATA…CKWERLDLGL (632 aa)) are extracellular. Asn21 carries an N-linked (GlcNAc...) asparagine glycan. The region spanning 29 to 56 (ASQGVCKLVGGAADCRGQSLASVPSSLP) is the LRRNT domain. LRR repeat units lie at residues 58–79 (HARM…SLQP), 82–103 (LLES…AFQE), 106–127 (HLRS…TAAA), 133–155 (GLRR…MLQN), 158–179 (SLRS…VFEG), 182–203 (RLRE…AFDG), 206–227 (ELRH…GLTR), 228–239 (LRVLNVSYNVLE), 251–272 (ELET…PQYS), and 273–294 (KLRT…YNTS). Residue Asn74 is glycosylated (N-linked (GlcNAc...) asparagine). The N-linked (GlcNAc...) asparagine glycan is linked to Asn155. Residue Asn232 is glycosylated (N-linked (GlcNAc...) asparagine). N-linked (GlcNAc...) asparagine glycans are attached at residues Asn292, Asn309, and Asn312. LRR repeat units follow at residues 329-350 (DLRF…FLRK), 353-374 (SLSH…EHEP), 377-398 (ALTE…PGLA), 403-424 (SLRL…LFAN), 427-447 (NITT…PAAS), 463-484 (SLRS…PFQG), 486-507 (SLTY…APLQ), 512-534 (MLQV…DFSG), 537-558 (NLRD…GGSL), 559-580 (ALET…AVSE), and 585-594 (GLRTIYLSQN). N-linked (GlcNAc...) asparagine glycosylation is found at Asn408 and Asn427. An N-linked (GlcNAc...) asparagine glycan is attached at Asn500. In terms of domain architecture, LRRCT spans 595-643 (PYDCCGVDGWGALQHGQTVADWAMVTCNLSSKIIRVTELPGGVPRDCKW). Asn622 carries an N-linked (GlcNAc...) asparagine glycan. The helical transmembrane segment at 651–671 (LYLVLILPSCLTLLVACTVIV) threads the bilayer. Residues 672-692 (LTFKKPLLQVIKSRCHWSSVY) lie on the Cytoplasmic side of the membrane.

It belongs to the LRRC32/LRRC33 family. Interacts with TGFB1; associates via disulfide bonds with the Latency-associated peptide chain (LAP) regulatory chain of TGFB1, leading to regulate activation of TGF-beta-1. Interacts (via LRR repeats) with TLR2, TLR3, TLR4, TLR9 and probably other Toll-like receptors. Interacts with CYBB/NOX2; the interaction is direct. Mainly expressed in cells of hematopoietic origin. Highly expressed in bone marrow, thymus, liver, lung, intestine and spleen. In the brain, highly expressed in microglia.

The protein localises to the cell membrane. The protein resides in the endoplasmic reticulum membrane. Functionally, key regulator of transforming growth factor beta-1 (TGFB1) specifically required for microglia function in the nervous system. Required for activation of latent TGF-beta-1 in macrophages and microglia: associates specifically via disulfide bonds with the Latency-associated peptide (LAP), which is the regulatory chain of TGFB1, and regulates integrin-dependent activation of TGF-beta-1. TGF-beta-1 activation mediated by LRRC33/NRROS is highly localized: there is little spreading of TGF-beta-1 activated from one microglial cell to neighboring microglia, suggesting the existence of localized and selective activation of TGF-beta-1 by LRRC33/NRROS. Indirectly plays a role in Toll-like receptor (TLR) signaling: ability to inhibit TLR-mediated NF-kappa-B activation and cytokine production is probably a consequence of its role in TGF-beta-1 signaling. The polypeptide is Transforming growth factor beta activator LRRC33 (Homo sapiens (Human)).